The chain runs to 323 residues: Methenyltetrahydromethanopterin cyclohydrolase (323 aa).

This sequence belongs to the MCH family.

It is found in the cytoplasm. It carries out the reaction 5,10-methenyl-5,6,7,8-tetrahydromethanopterin + H2O = N(5)-formyl-5,6,7,8-tetrahydromethanopterin + H(+). It functions in the pathway one-carbon metabolism; methanogenesis from CO(2); 5,10-methenyl-5,6,7,8-tetrahydromethanopterin from CO(2): step 3/3. Functionally, catalyzes the reversible interconversion of 5-formyl-H(4)MPT to methenyl-H(4)MPT(+). The chain is Methenyltetrahydromethanopterin cyclohydrolase from Methanococcus maripaludis (strain C7 / ATCC BAA-1331).